A 401-amino-acid polypeptide reads, in one-letter code: S-adenosylmethionine synthase (401 aa).

His-16 is an ATP binding site. Asp-18 is a binding site for Mg(2+). Position 44 (Glu-44) interacts with K(+). Residues Glu-57 and Gln-100 each coordinate L-methionine. The tract at residues 100–110 is flexible loop; sequence QSPDIAQGVNE. ATP is bound by residues 174–176, 241–242, Asp-250, 256–257, Ala-273, and Lys-277; these read DAK, RF, and RK. An L-methionine-binding site is contributed by Asp-250. Residue Lys-281 coordinates L-methionine.

The protein belongs to the AdoMet synthase family. Homotetramer; dimer of dimers. Mg(2+) serves as cofactor. K(+) is required as a cofactor.

Its subcellular location is the cytoplasm. It carries out the reaction L-methionine + ATP + H2O = S-adenosyl-L-methionine + phosphate + diphosphate. The protein operates within amino-acid biosynthesis; S-adenosyl-L-methionine biosynthesis; S-adenosyl-L-methionine from L-methionine: step 1/1. Functionally, catalyzes the formation of S-adenosylmethionine (AdoMet) from methionine and ATP. The overall synthetic reaction is composed of two sequential steps, AdoMet formation and the subsequent tripolyphosphate hydrolysis which occurs prior to release of AdoMet from the enzyme. This chain is S-adenosylmethionine synthase, found in Streptococcus equi subsp. zooepidemicus (strain H70).